The chain runs to 399 residues: Phosphoglycerate kinase (399 aa).

Substrate-binding positions include 21-23 (DFN), arginine 36, 59-62 (HLGR), arginine 120, and arginine 158. Residues lysine 209, glycine 297, glutamate 328, and 355 to 358 (GGDS) contribute to the ATP site.

The protein belongs to the phosphoglycerate kinase family. As to quaternary structure, monomer.

The protein localises to the cytoplasm. It carries out the reaction (2R)-3-phosphoglycerate + ATP = (2R)-3-phospho-glyceroyl phosphate + ADP. Its pathway is carbohydrate degradation; glycolysis; pyruvate from D-glyceraldehyde 3-phosphate: step 2/5. In Streptococcus suis (strain 05ZYH33), this protein is Phosphoglycerate kinase.